The sequence spans 215 residues: Ribose-5-phosphate isomerase A (215 aa).

Residues 26–29 (TGST), 79–82 (DGAD), and 92–95 (KGGG) each bind substrate. Glu101 acts as the Proton acceptor in catalysis. Substrate is bound at residue Lys119.

It belongs to the ribose 5-phosphate isomerase family. In terms of assembly, homodimer.

The catalysed reaction is aldehydo-D-ribose 5-phosphate = D-ribulose 5-phosphate. The protein operates within carbohydrate degradation; pentose phosphate pathway; D-ribose 5-phosphate from D-ribulose 5-phosphate (non-oxidative stage): step 1/1. Functionally, catalyzes the reversible conversion of ribose-5-phosphate to ribulose 5-phosphate. The protein is Ribose-5-phosphate isomerase A of Xanthomonas axonopodis pv. citri (strain 306).